Reading from the N-terminus, the 709-residue chain is Molybdenum cofactor sulfurase (709 aa).

Position 208 is an N6-(pyridoxal phosphate)lysine (Lys-208). Residue Cys-367 is part of the active site. Residues 563-707 (DNALDRQNCR…LESGMSVNFS (145 aa)) enclose the MOSC domain.

The protein belongs to the class-V pyridoxal-phosphate-dependent aminotransferase family. MOCOS subfamily. Pyridoxal 5'-phosphate is required as a cofactor.

It carries out the reaction Mo-molybdopterin + L-cysteine + AH2 = thio-Mo-molybdopterin + L-alanine + A + H2O. The protein operates within cofactor biosynthesis; molybdopterin biosynthesis. In terms of biological role, sulfurates the molybdenum cofactor. Sulfation of molybdenum is essential for xanthine dehydrogenase (XDH) and aldehyde oxidase (ADO) enzymes in which molybdenum cofactor is liganded by 1 oxygen and 1 sulfur atom in active form. The chain is Molybdenum cofactor sulfurase from Caenorhabditis elegans.